The chain runs to 434 residues: MSFNTIIDWNSCTAEQQRQLLMRPAISTSESITRTVNDILDNVKARGDEALREYSAKFDKTTVTALTVSAEEIAAASERLSDELKQAMAVAVKNIETFHTAQKLPPVDVETQPGVRCQQVTRPVASVGLYIPGGSAPLFSTVLMLATPARIAGCKKVVLCSPPPIADEILYAAQLCGVQDVFNVGGAQAIAALAFGTESVPKVDKIFGPGNAFVTEAKRQVSQRLDGAAIDMPAGPSEVLVIADSGATPDFVASDLLSQAEHGPDSQVILLTPAADMARRVAEAVERQLAELPRAETARQALSASRLIVTKDLAQCVEISNQYGPEHLIIQTRNARVLVDGITSAGSVFLGDWSPESAGDYASGTNHVLPTYGYTATCSSLGLADFQKRMTVQELSKEGFSALASTIETLAAAERLTAHKNAVTLRVNALKEQA.

The NAD(+) site is built by Tyr130, Gln188, and Asn211. 3 residues coordinate substrate: Ser237, Gln259, and His262. Gln259 and His262 together coordinate Zn(2+). Residues Glu326 and His327 each act as proton acceptor in the active site. Residues His327, Asp360, Glu414, and His419 each contribute to the substrate site. Asp360 serves as a coordination point for Zn(2+). His419 serves as a coordination point for Zn(2+).

Belongs to the histidinol dehydrogenase family. As to quaternary structure, homodimer. The cofactor is Zn(2+).

The catalysed reaction is L-histidinol + 2 NAD(+) + H2O = L-histidine + 2 NADH + 3 H(+). It participates in amino-acid biosynthesis; L-histidine biosynthesis; L-histidine from 5-phospho-alpha-D-ribose 1-diphosphate: step 9/9. Functionally, catalyzes the sequential NAD-dependent oxidations of L-histidinol to L-histidinaldehyde and then to L-histidine. In Shigella dysenteriae serotype 1 (strain Sd197), this protein is Histidinol dehydrogenase.